The primary structure comprises 507 residues: ATP synthase subunit alpha, chloroplastic (507 aa).

170–177 (GDRQTGKT) lines the ATP pocket.

The protein belongs to the ATPase alpha/beta chains family. As to quaternary structure, F-type ATPases have 2 components, CF(1) - the catalytic core - and CF(0) - the membrane proton channel. CF(1) has five subunits: alpha(3), beta(3), gamma(1), delta(1), epsilon(1). CF(0) has four main subunits: a, b, b' and c.

It localises to the plastid. It is found in the chloroplast thylakoid membrane. The catalysed reaction is ATP + H2O + 4 H(+)(in) = ADP + phosphate + 5 H(+)(out). Its function is as follows. Produces ATP from ADP in the presence of a proton gradient across the membrane. The alpha chain is a regulatory subunit. In Amborella trichopoda, this protein is ATP synthase subunit alpha, chloroplastic.